A 101-amino-acid chain; its full sequence is Protein RnfH (101 aa).

Belongs to the UPF0125 (RnfH) family.

This is Protein RnfH from Coxiella burnetii (strain CbuK_Q154) (Coxiella burnetii (strain Q154)).